Here is a 201-residue protein sequence, read N- to C-terminus: Large ribosomal subunit protein uL4 (201 aa).

Residues 44–71 (RAQKTRAEVTGSGKKPWRQKGTGRARSG) are disordered.

It belongs to the universal ribosomal protein uL4 family. In terms of assembly, part of the 50S ribosomal subunit.

Functionally, one of the primary rRNA binding proteins, this protein initially binds near the 5'-end of the 23S rRNA. It is important during the early stages of 50S assembly. It makes multiple contacts with different domains of the 23S rRNA in the assembled 50S subunit and ribosome. Forms part of the polypeptide exit tunnel. This is Large ribosomal subunit protein uL4 from Escherichia fergusonii (strain ATCC 35469 / DSM 13698 / CCUG 18766 / IAM 14443 / JCM 21226 / LMG 7866 / NBRC 102419 / NCTC 12128 / CDC 0568-73).